The sequence spans 296 residues: Protein RarD (296 aa).

Residues 1–11 are Cytoplasmic-facing; that stretch reads MDAKQTRQGVL. Residues 12–34 traverse the membrane as a helical segment; that stretch reads LALAAYFIWGIAPAYFKLIYYVP. Positions 18-145 constitute an EamA domain; sequence FIWGIAPAYF…AICGVLVQLW (128 aa). Residues 35 to 37 are Periplasmic-facing; sequence ADE. A helical membrane pass occupies residues 38–60; it reads ILTHRVIWSFFFMVVLMSICRQW. At 61–72 the chain is on the cytoplasmic side; the sequence is SYLKTLIQTPQK. The chain crosses the membrane as a helical span at residues 73 to 95; sequence IFMLAVSAVLIGGNWLLFIWAVN. The Periplasmic portion of the chain corresponds to 96–99; the sequence is NHHM. The chain crosses the membrane as a helical span at residues 100–122; the sequence is LEASLGYFINPLVNIVLGMIFLG. Residues 123 to 128 are Cytoplasmic-facing; it reads ERFRRM. A helical transmembrane segment spans residues 129 to 146; the sequence is QWLAVILAICGVLVQLWT. The Periplasmic portion of the chain corresponds to 147 to 149; the sequence is FGS. Residues 150 to 167 form a helical membrane-spanning segment; sequence LPIIALGLAFSFAFYGLV. At 168–179 the chain is on the cytoplasmic side; the sequence is RKKIAVEAQTGM. A helical membrane pass occupies residues 180–197; sequence LIETMWLLPVAAIYLFAI. The Periplasmic segment spans residues 198 to 211; it reads ADSSTSHMGQNPMS. Residues 212 to 234 form a helical membrane-spanning segment; that stretch reads LNLLLIAAGIVTTVPLLCFTAAA. The Cytoplasmic segment spans residues 235–238; that stretch reads TRLR. A helical transmembrane segment spans residues 239 to 261; the sequence is LSTLGFFQYIGPTLMFLLAVTFY. The Periplasmic portion of the chain corresponds to 262-270; it reads GEKPGADKM. The helical transmembrane segment at 271 to 290 threads the bilayer; that stretch reads VTFAFIWVALAIFVMDAIYT. Topologically, residues 291–296 are cytoplasmic; the sequence is QRRTSK.

It belongs to the EamA transporter family.

It localises to the cell inner membrane. This chain is Protein RarD (rarD), found in Escherichia coli (strain K12).